The following is a 138-amino-acid chain: Large ribosomal subunit protein bL19 (138 aa).

This sequence belongs to the bacterial ribosomal protein bL19 family.

In terms of biological role, this protein is located at the 30S-50S ribosomal subunit interface and may play a role in the structure and function of the aminoacyl-tRNA binding site. This is Large ribosomal subunit protein bL19 from Rickettsia felis (strain ATCC VR-1525 / URRWXCal2) (Rickettsia azadi).